The sequence spans 382 residues: Alanine racemase (382 aa).

The Proton acceptor; specific for D-alanine role is filled by Lys37. Lys37 is subject to N6-(pyridoxal phosphate)lysine. Arg135 serves as a coordination point for substrate. Tyr267 functions as the Proton acceptor; specific for L-alanine in the catalytic mechanism. A substrate-binding site is contributed by Met315.

The protein belongs to the alanine racemase family. Pyridoxal 5'-phosphate serves as cofactor.

It carries out the reaction L-alanine = D-alanine. It participates in amino-acid biosynthesis; D-alanine biosynthesis; D-alanine from L-alanine: step 1/1. Functionally, catalyzes the interconversion of L-alanine and D-alanine. May also act on other amino acids. The protein is Alanine racemase (alr) of Geobacter sulfurreducens (strain ATCC 51573 / DSM 12127 / PCA).